The chain runs to 215 residues: Transmembrane emp24 domain-containing protein 11 (215 aa).

The signal sequence occupies residues 1–17 (MQIQTILLCFSFSFSAA). Residues 18–167 (FYFHAGEREE…ILKEQDYQRD (150 aa)) lie on the Lumenal side of the membrane. The region spanning 27–125 (EKCIIEDIPS…KLRIHLDIRV (99 aa)) is the GOLD domain. A glycan (N-linked (GlcNAc...) asparagine) is linked at Asn-105. The stretch at 136 to 171 (QAKDKVNEVTFKLQHLIEQVEQILKEQDYQRDREEN) forms a coiled coil. Residues 168 to 185 (REENFRITSEDTNRNVLW) traverse the membrane as a helical segment. Residues 186-215 (WAFAQILIFISVGIFQMKHLKDFFIAKKLV) lie on the Cytoplasmic side of the membrane. The short motif at 208–209 (FF) is the COPII vesicle coat-binding element. The COPI vesicle coat-binding motif lies at 208 to 215 (FFIAKKLV).

The protein belongs to the EMP24/GP25L family.

Its subcellular location is the endoplasmic reticulum membrane. In terms of biological role, part of a complex whose function is to bind Ca(2+) to the ER membrane and thereby regulate the retention of ER resident proteins. In Mus musculus (Mouse), this protein is Transmembrane emp24 domain-containing protein 11 (Tmed11).